A 121-amino-acid chain; its full sequence is MIQRQTYLNVADNSGAKKVQVIGIPYAPRKYATLGDVVTVTVKEALPQGNAKKGKIYRAIIVRTAKEVRRPDGSYIKFDDNACVLLNQYGEPLGTRVLGPIAREVRNKGFTKIASLAPEVV.

Belongs to the universal ribosomal protein uL14 family. In terms of assembly, part of the 50S ribosomal subunit. Forms a cluster with proteins L3 and L19. In the 70S ribosome, L14 and L19 interact and together make contacts with the 16S rRNA in bridges B5 and B8.

Functionally, binds to 23S rRNA. Forms part of two intersubunit bridges in the 70S ribosome. In Aquifex aeolicus (strain VF5), this protein is Large ribosomal subunit protein uL14.